Here is a 291-residue protein sequence, read N- to C-terminus: uncharacterized protein (291 aa).

6 helical membrane-spanning segments follow: residues 13–33 (FDLF…MEMG), 40–60 (LGTV…LGFL), 81–101 (GFLN…LICI), 128–148 (FGLF…RLLL), 158–178 (VILG…YLEY), and 220–240 (GNVW…ILLA). Asn-249 carries an N-linked (GlcNAc...) asparagine glycan. A disordered region spans residues 269 to 291 (MASEDPPKDPLPRQEGGGGDTIA).

Its subcellular location is the membrane. This is an uncharacterized protein from Encephalitozoon cuniculi (strain GB-M1) (Microsporidian parasite).